The sequence spans 226 residues: Phosphoglycolate phosphatase (226 aa).

Asp5 serves as the catalytic Nucleophile. Mg(2+) is bound by residues Asp5 and Asp7. Lys142 is a binding site for substrate. 2 residues coordinate Mg(2+): Asp164 and Asp168.

The protein belongs to the archaeal SPP-like hydrolase family. Requires Mg(2+) as cofactor.

It carries out the reaction 2-phosphoglycolate + H2O = glycolate + phosphate. Functionally, catalyzes the dephosphorylation of 2-phosphoglycolate. This is Phosphoglycolate phosphatase from Sulfurisphaera tokodaii (strain DSM 16993 / JCM 10545 / NBRC 100140 / 7) (Sulfolobus tokodaii).